Here is a 256-residue protein sequence, read N- to C-terminus: MNNIWWQSKGQGNVHLVLLHGWGLNAEVWRCIDEELSSHFTLHLVDLPGFGRSRGFGALSLADMAEVVLRQAPDKAIWLGWSLGGLVASQIALTHPERVQALVTVASSPCFSARDEWPGIKPDVLAGFQQQLSDDFQRTVERFLALQTMGTETARQDARALKKTVLALPMPEVDVLNGGLEILKMVDLRQPLQNVSMPFLRLYGYLDGLVPRKVVPMLDKLWPHSESYIFAKAAHAPFISHPAEFCRMLVVLKQRV.

The AB hydrolase-1 domain occupies 15-242; the sequence is HLVLLHGWGL…AAHAPFISHP (228 aa). Substrate-binding positions include Trp-22, 82 to 83, and 143 to 147; these read SL and FLALQ. Ser-82 (nucleophile) is an active-site residue. Catalysis depends on residues Asp-207 and His-235. His-235 is a substrate binding site.

This sequence belongs to the AB hydrolase superfamily. Carboxylesterase BioH family. As to quaternary structure, monomer.

The protein localises to the cytoplasm. The catalysed reaction is 6-carboxyhexanoyl-[ACP] methyl ester + H2O = 6-carboxyhexanoyl-[ACP] + methanol + H(+). It participates in cofactor biosynthesis; biotin biosynthesis. In terms of biological role, the physiological role of BioH is to remove the methyl group introduced by BioC when the pimeloyl moiety is complete. It allows to synthesize pimeloyl-ACP via the fatty acid synthetic pathway through the hydrolysis of the ester bonds of pimeloyl-ACP esters. The sequence is that of Pimeloyl-[acyl-carrier protein] methyl ester esterase from Escherichia coli O127:H6 (strain E2348/69 / EPEC).